The sequence spans 827 residues: Multiple RNA-binding domain-containing protein 1 (827 aa).

The RRM 1 domain maps to 5 to 78; the sequence is SRIFVKNLPP…SRISVDIAKP (74 aa). 3 disordered regions span residues 77–116, 176–230, and 256–299; these read KPIA…TAAA, AGLE…ATDD, and AASG…DPES. Residues 179-189 show a composition bias toward acidic residues; the sequence is EDGESDDEYED. 2 stretches are compositionally biased toward low complexity: residues 208–225 and 256–270; these read APLA…PVSL and AASG…STSV. A compositionally biased stretch (basic and acidic residues) spans 277 to 288; sequence KPEEHPAEDSRE. RRM domains lie at 308 to 384, 489 to 560, 599 to 682, and 704 to 781; these read SRLF…PAAA, TTIL…KGPK, SSLF…ASHR, and TKLV…FAQA.

This sequence belongs to the RRM MRD1 family.

It localises to the nucleus. Functionally, involved in pre-rRNA processing. This is Multiple RNA-binding domain-containing protein 1 (mrd-1) from Neurospora crassa (strain ATCC 24698 / 74-OR23-1A / CBS 708.71 / DSM 1257 / FGSC 987).